The chain runs to 603 residues: Translation initiation factor IF-2 (603 aa).

In terms of domain architecture, tr-type G spans 112–279 (TRPPIITIMG…NINLQAEILD (168 aa)). The G1 stretch occupies residues 121–128 (GHVDHGKT). GTP is bound at residue 121–128 (GHVDHGKT). A G2 region spans residues 146–150 (GITQH). A G3 region spans residues 167-170 (DTPG). GTP is bound by residues 167 to 171 (DTPGH) and 221 to 224 (NKMD). Positions 221–224 (NKMD) are G4. The interval 257–259 (SAL) is G5.

The protein belongs to the TRAFAC class translation factor GTPase superfamily. Classic translation factor GTPase family. IF-2 subfamily.

It is found in the cytoplasm. Its function is as follows. One of the essential components for the initiation of protein synthesis. Protects formylmethionyl-tRNA from spontaneous hydrolysis and promotes its binding to the 30S ribosomal subunits. Also involved in the hydrolysis of GTP during the formation of the 70S ribosomal complex. The sequence is that of Translation initiation factor IF-2 from Mycoplasmopsis pulmonis (strain UAB CTIP) (Mycoplasma pulmonis).